We begin with the raw amino-acid sequence, 165 residues long: Type 3 secretion system regulator YopR (165 aa).

It belongs to the YopR family.

The protein localises to the secreted. Its function is as follows. May be involved in the regulation of the assembly of the type III secretion system (T3SS), also called injectisome, which is used to inject bacterial effector proteins into eukaryotic host cells. May control the secretion and/or polymerization of YscF/SctF, the principal component of the needle filament, thereby impacting the assembly of the T3SS. Involved in pathogenesis. In Yersinia pestis, this protein is Type 3 secretion system regulator YopR.